Consider the following 513-residue polypeptide: Bifunctional purine biosynthesis protein PurH (513 aa).

Residues 1-146 (MPRFALLSVS…KNHAHLTILT (146 aa)) form the MGS-like domain.

It belongs to the PurH family.

The catalysed reaction is (6R)-10-formyltetrahydrofolate + 5-amino-1-(5-phospho-beta-D-ribosyl)imidazole-4-carboxamide = 5-formamido-1-(5-phospho-D-ribosyl)imidazole-4-carboxamide + (6S)-5,6,7,8-tetrahydrofolate. It catalyses the reaction IMP + H2O = 5-formamido-1-(5-phospho-D-ribosyl)imidazole-4-carboxamide. It participates in purine metabolism; IMP biosynthesis via de novo pathway; 5-formamido-1-(5-phospho-D-ribosyl)imidazole-4-carboxamide from 5-amino-1-(5-phospho-D-ribosyl)imidazole-4-carboxamide (10-formyl THF route): step 1/1. It functions in the pathway purine metabolism; IMP biosynthesis via de novo pathway; IMP from 5-formamido-1-(5-phospho-D-ribosyl)imidazole-4-carboxamide: step 1/1. The protein is Bifunctional purine biosynthesis protein PurH of Synechococcus elongatus (strain ATCC 33912 / PCC 7942 / FACHB-805) (Anacystis nidulans R2).